The chain runs to 121 residues: Large ribosomal subunit protein bL12 (121 aa).

This sequence belongs to the bacterial ribosomal protein bL12 family. As to quaternary structure, homodimer. Part of the ribosomal stalk of the 50S ribosomal subunit. Forms a multimeric L10(L12)X complex, where L10 forms an elongated spine to which 2 to 4 L12 dimers bind in a sequential fashion. Binds GTP-bound translation factors.

Its function is as follows. Forms part of the ribosomal stalk which helps the ribosome interact with GTP-bound translation factors. Is thus essential for accurate translation. This Xanthomonas axonopodis pv. citri (strain 306) protein is Large ribosomal subunit protein bL12.